A 176-amino-acid chain; its full sequence is NAD(P)H-quinone oxidoreductase subunit 6, chloroplastic (176 aa).

Transmembrane regions (helical) follow at residues F10–P30, I33–A53, A61–M81, L92–I112, and F152–S172.

It belongs to the complex I subunit 6 family. NDH is composed of at least 16 different subunits, 5 of which are encoded in the nucleus.

Its subcellular location is the plastid. It is found in the chloroplast thylakoid membrane. It catalyses the reaction a plastoquinone + NADH + (n+1) H(+)(in) = a plastoquinol + NAD(+) + n H(+)(out). The enzyme catalyses a plastoquinone + NADPH + (n+1) H(+)(in) = a plastoquinol + NADP(+) + n H(+)(out). Its function is as follows. NDH shuttles electrons from NAD(P)H:plastoquinone, via FMN and iron-sulfur (Fe-S) centers, to quinones in the photosynthetic chain and possibly in a chloroplast respiratory chain. The immediate electron acceptor for the enzyme in this species is believed to be plastoquinone. Couples the redox reaction to proton translocation, and thus conserves the redox energy in a proton gradient. In Arabis hirsuta (Hairy rock-cress), this protein is NAD(P)H-quinone oxidoreductase subunit 6, chloroplastic (ndhG).